Here is a 329-residue protein sequence, read N- to C-terminus: Biotin synthase (329 aa).

A Radical SAM core domain is found at 38-262 (NTIQVSTLLS…IMPHSYIRLS (225 aa)). 3 residues coordinate [4Fe-4S] cluster: Cys-53, Cys-57, and Cys-60. Positions 97, 128, 188, and 260 each coordinate [2Fe-2S] cluster.

This sequence belongs to the radical SAM superfamily. Biotin synthase family. As to quaternary structure, homodimer. It depends on [4Fe-4S] cluster as a cofactor. [2Fe-2S] cluster is required as a cofactor.

The catalysed reaction is (4R,5S)-dethiobiotin + (sulfur carrier)-SH + 2 reduced [2Fe-2S]-[ferredoxin] + 2 S-adenosyl-L-methionine = (sulfur carrier)-H + biotin + 2 5'-deoxyadenosine + 2 L-methionine + 2 oxidized [2Fe-2S]-[ferredoxin]. The protein operates within cofactor biosynthesis; biotin biosynthesis; biotin from 7,8-diaminononanoate: step 2/2. Catalyzes the conversion of dethiobiotin (DTB) to biotin by the insertion of a sulfur atom into dethiobiotin via a radical-based mechanism. This is Biotin synthase from Acinetobacter calcoaceticus.